Consider the following 318-residue polypeptide: MRIVVLAGGIGGARFLRGLKQAAPDADITVIGNTGDDIHLFGLKVCPDLDTVMYTLGGGINEEQGWGRTDETFQVKEELAAYGVGPGWFGLGDRDFATHIVRTQMLGAGYPLSAVTEALCARWQPGVRLLPMSDDRVETHVAVETDGESKAIHFQEYWVKLRASVEAQAIVPVGAEQAKPAPGVLEAIGSADVIVFPPSNPVVSIGTILAVPGIREAIAEAGVPVVGLSPIVGDAPVRGMADKVLAAVGVESTAAAVARHYGSGLLDGWLVDTVDAGAVEEVEAAGIRCRAVPLMMTDVDATAAMARQALELAEEVRA.

D50 lines the 7,8-didemethyl-8-hydroxy-5-deazariboflavin pocket.

This sequence belongs to the CofD family. In terms of assembly, homodimer. Mg(2+) is required as a cofactor.

The catalysed reaction is enolpyruvoyl-2-diphospho-5'-guanosine + 7,8-didemethyl-8-hydroxy-5-deazariboflavin = dehydro coenzyme F420-0 + GMP + H(+). It functions in the pathway cofactor biosynthesis; coenzyme F420 biosynthesis. Functionally, catalyzes the transfer of the phosphoenolpyruvate moiety from enoylpyruvoyl-2-diphospho-5'-guanosine (EPPG) to 7,8-didemethyl-8-hydroxy-5-deazariboflavin (FO) with the formation of dehydro coenzyme F420-0 and GMP. The protein is Phosphoenolpyruvate transferase of Streptomyces griseus subsp. griseus (strain JCM 4626 / CBS 651.72 / NBRC 13350 / KCC S-0626 / ISP 5235).